A 454-amino-acid chain; its full sequence is Tryptophanase (454 aa).

Lys256 carries the post-translational modification N6-(pyridoxal phosphate)lysine.

Belongs to the beta-eliminating lyase family. In terms of assembly, homotetramer. The cofactor is pyridoxal 5'-phosphate.

The enzyme catalyses L-tryptophan + H2O = indole + pyruvate + NH4(+). It functions in the pathway amino-acid degradation; L-tryptophan degradation via pyruvate pathway; indole and pyruvate from L-tryptophan: step 1/1. The chain is Tryptophanase from Hyphomonas neptunium (strain ATCC 15444).